Here is a 234-residue protein sequence, read N- to C-terminus: Urease accessory protein UreF (234 aa).

This sequence belongs to the UreF family. UreD, UreF and UreG form a complex that acts as a GTP-hydrolysis-dependent molecular chaperone, activating the urease apoprotein by helping to assemble the nickel containing metallocenter of UreC. The UreE protein probably delivers the nickel.

It localises to the cytoplasm. Functionally, required for maturation of urease via the functional incorporation of the urease nickel metallocenter. This Kocuria rhizophila (strain ATCC 9341 / DSM 348 / NBRC 103217 / DC2201) protein is Urease accessory protein UreF.